A 474-amino-acid polypeptide reads, in one-letter code: Protein FAM161A (474 aa).

Disordered stretches follow at residues 78–126 (SSSS…PGEI), 185–210 (QKRR…DDAE), and 308–364 (REEL…DQGL). The stretch at 188 to 250 (REKASDAQET…KKTRERSKAA (63 aa)) forms a coiled coil. Positions 274–454 (KLRELCRAKK…PTASSRGREQ (181 aa)) are required for interaction with CFAP418. Residues 325–335 (LQSSPWPSHST) are compositionally biased toward polar residues. Residues Lys397 and Lys413 each participate in a glycyl lysine isopeptide (Lys-Gly) (interchain with G-Cter in SUMO2) cross-link. The disordered stretch occupies residues 412–474 (LKETRRPNPS…KELARIGGAR (63 aa)). Basic residues predominate over residues 422–431 (PRHKSPRRSA). A compositionally biased stretch (basic and acidic residues) spans 450–468 (RGREQAIRRSEKARMKELA).

Belongs to the FAM161 family. Interacts (via central region) with CFAP418 (via N-terminus); the interaction is direct. Interacts (via C-terminus) with microtubules. Interacts with LCA5. Interacts with CEP290. Interacts with SDCCAG8. Interacts with FAM161B. Interacts with POC1B. Interacts with CEP78. Forms a microtubule-associated complex with POC5, CETN2 and POC1B. Interacts with CCDC15. As to expression, expressed in the retina and kidney.

The protein resides in the cytoplasm. Its subcellular location is the cytoskeleton. It localises to the cilium basal body. The protein localises to the cell projection. It is found in the cilium. The protein resides in the microtubule organizing center. Its subcellular location is the centrosome. It localises to the centriole. Functionally, involved in ciliogenesis. The chain is Protein FAM161A from Rattus norvegicus (Rat).